The primary structure comprises 150 residues: 3-dehydroquinate dehydratase (150 aa).

Residue Tyr26 is the Proton acceptor of the active site. Residues Asn77, His83, and Asp90 each contribute to the substrate site. The active-site Proton donor is the His103. Residues 104–105 (LS) and Arg114 each bind substrate.

It belongs to the type-II 3-dehydroquinase family. As to quaternary structure, homododecamer.

The catalysed reaction is 3-dehydroquinate = 3-dehydroshikimate + H2O. Its pathway is metabolic intermediate biosynthesis; chorismate biosynthesis; chorismate from D-erythrose 4-phosphate and phosphoenolpyruvate: step 3/7. In terms of biological role, catalyzes a trans-dehydration via an enolate intermediate. This chain is 3-dehydroquinate dehydratase, found in Sodalis glossinidius (strain morsitans).